The primary structure comprises 210 residues: Eukaryotic translation initiation factor 2 subunit gamma (210 aa).

The 196-residue stretch at 1–196 (IGHVAHGKST…HLVETITPPR (196 aa)) folds into the tr-type G domain. The G1 stretch occupies residues 2-9 (GHVAHGKS). 5 to 10 (AHGKST) contacts GTP. The G2 stretch occupies residues 30-34 (NITIK). The tract at residues 85–88 (DCPG) is G3. Residues 141–144 (NKID) and 174–176 (SAI) each bind GTP. Positions 141–144 (NKID) are G4. The interval 174–176 (SAI) is G5.

It belongs to the TRAFAC class translation factor GTPase superfamily. Classic translation factor GTPase family. EIF2G subfamily. Eukaryotic translation initiation factor 2 eIF2 is a heterotrimeric complex composed of an alpha, a beta and a gamma subunit. The factors eIF-1, eIF-2, eIF-3, TIF5/eIF-5 and methionyl-tRNAi form a multifactor complex (MFC) that may bind to the 40S ribosome.

The protein localises to the cytoplasm. It is found in the cytosol. It catalyses the reaction GTP + H2O = GDP + phosphate + H(+). Functionally, as a subunit of eukaryotic initiation factor 2 eIF2, involved in the early steps of protein synthesis. In the presence of GTP, eIF-2 forms a ternary complex with initiator tRNA Met-tRNAi and then recruits the 40S ribosomal complex and initiation factors eIF-1, eIF-1A and eIF-3 to form the 43S pre-initiation complex (43S PIC), a step that determines the rate of protein translation. The 43S PIC binds to mRNA and scans downstream to the initiation codon, where it forms a 48S initiation complex by codon-anticodon base pairing. This leads to the displacement of eIF-1 to allow GTPase-activating protein (GAP) eIF-5-mediated hydrolysis of eIF2-bound GTP. Hydrolysis of GTP and release of Pi, which makes GTP hydrolysis irreversible, causes the release of the eIF-2-GDP binary complex from the 40S subunit, an event that is essential for the subsequent joining of the 60S ribosomal subunit to form an elongation-competent 80S ribosome. In order for eIF-2 to recycle and catalyze another round of initiation, the GDP bound to eIF-2 must be exchanged with GTP by way of a reaction catalyzed by GDP-GTP exchange factor (GEF) eIF-2B. The protein is Eukaryotic translation initiation factor 2 subunit gamma of Spironucleus vortens.